Here is a 549-residue protein sequence, read N- to C-terminus: Cation/acetate symporter ActP (549 aa).

13 helical membrane passes run 33–53 (WQAIIMFLIFVVFTLGITYWA), 77–97 (LAIAGDYMSAASFLGISALVF), 103–123 (GLIYSLGFLVGWPIILFLIAE), 148–168 (ILSACGSLVVVALYLIAQMVG), 183–203 (IAVVLVGVLMMMYVLFGGMLA), 206–226 (WVQIIKAVLLLFGASFMAFMV), 262–282 (ISALSLGLGLMFGTAGLPHIL), 303–323 (GFMGYFYILTFIIGFGAIMLV), 355–375 (LFLGFISAVAFATILAVVAGL), 404–424 (VSKITVLILGVIAIILGVLFE), 428–448 (IAFMVGLAFAIAASCNFPIIL), 464–484 (GGWLGLITAVVLMILGPTIWV), and 493–513 (IFPYEYPALFSITVAFLGIWF).

The protein belongs to the sodium:solute symporter (SSF) (TC 2.A.21) family.

The protein resides in the cell inner membrane. In terms of biological role, transports acetate. The protein is Cation/acetate symporter ActP of Escherichia coli (strain ATCC 8739 / DSM 1576 / NBRC 3972 / NCIMB 8545 / WDCM 00012 / Crooks).